Reading from the N-terminus, the 374-residue chain is O-methyltransferase acrG (374 aa).

S-adenosyl-L-homocysteine-binding residues include Tyr19, Asn70, Asp96, Ser128, and Phe129. Phe245 lines the Mg(2+) pocket.

This sequence belongs to the methyltransferase superfamily. Type-7 methyltransferase family.

The protein operates within secondary metabolite biosynthesis. Functionally, O-methyltransferase; part of the cluster that mediates the biosynthesis of acurin A, a highly reduced polyketide coupled to a serine via a peptide bond. The activities of the highly reducing polyketide synthase acrA and the nonribosomal peptide synthetase acrB are collectively responsible for the synthesis of the acurin A core structure with a heptaketide backbone produced by acrA covalently fused to a L-serine by acrB. After the formation of the PK-NRP hybrid product, it is detached from acrB by reductive release to set up the formation of the lactam ring by aldol condensation. The hydrolyase acrC then catalyzes water loss to generate a double bond in the ring. This double bond is probably reduced, which is followed by three oxidations at C-22 to generate the carboxylic acid moiety, involving probably the FAD-binding monooxygenase acrE and the cytochrome P450 monooxygenases acrD and acrF. Finally, a last methylation step performed by the O-methyltransferase acrG leads to the production of acurin A. This Aspergillus aculeatus (strain ATCC 16872 / CBS 172.66 / WB 5094) protein is O-methyltransferase acrG.